A 943-amino-acid chain; its full sequence is MSTMRLLTLALLFSCSFARAACDPKIVNIGAVLSTRKHEQMFREAVNQANKRHGSWKIQLNATSVTHKPNAIQMALSVCEDLISSQVYAILVSHPPTPNDHFTPTPVSYTAGFYRIPVLGLTTRMSIYSDKSIHLSFLRTVPPYSHQSSVWFEMMRVYSWNHIILLVSDDHEGRAAQKRLETLLEERESKSKKRNYENLDQLSYDHKRGPKAEKVLQFDPGTKNVTALLMEARELEARVIILSASEDDAATVYRAAAMLNMTGSGYVWLVGEREISGNALRYAPDGIIGLQLINGKNESAHISDAVGVVAQAVHELLEKENITDPPRGCVGNTNIWKTGPLFKRVLMSSKYADGVTGRVEFNEDGDRKFANYSIMNLQNRKLVQVGIYNGTHVIPNDRKIIWPGGETEKPRGYQMSTRLKIVTIHQEPFVYVKPTLSDGTCKEEFTVNGDPVKKVICTGPNDTSPGSPRHTVPQCCYGFCIDLLIKLARTMNFTYEVHLVADGKFGTQERVNNSNKKEWNGMMGELLSGQADMIVAPLTINNERAQYIEFSKPFKYQGLTILVKKEIPRSTLDSFMQPFQSTLWLLVGLSVHVVAVMLYLLDRFSPFGRFKVNSEEEEEDALTLSSAMWFSWGVLLNSGIGEGAPRSFSARILGMVWAGFAMIIVASYTANLAAFLVLDRPEERITGINDPRLRNPSDKFIYATVKQSSVDIYFRRQVELSTMYRHMEKHNYESAAEAIQAVRDNKLHAFIWDSAVLEFEASQKCDLVTTGELFFRSGFGIGMRKDSPWKQNVSLSILKSHENGFMEDLDKTWVRYQECDSRSNAPATLTFENMAGVFMLVAGGIVAGIFLIFIEIAYKRHKDARRKQMQLAFAAVNVWRKNLQDRKSGRAEPDPKKKATFRAITSTLASSFKRRRSSKDTQYHPTDITGTLNLSDPSVSTVV.

The signal sequence occupies residues 1 to 20 (MSTMRLLTLALLFSCSFARA). Over 21–580 (ACDPKIVNIG…TLDSFMQPFQ (560 aa)) the chain is Extracellular. Residues Asn61, Asn224, Asn260, Asn297, Asn321, Asn371, Asn389, Asn461, Asn492, and Asn512 are each glycosylated (N-linked (GlcNAc...) asparagine). Residues Cys79 and Cys329 are joined by a disulfide bond. Disulfide bonds link Cys441–Cys475 and Cys457–Cys476. Glycine contacts are provided by Pro537, Thr539, and Arg544. Residues 581-601 (STLWLLVGLSVHVVAVMLYLL) form a helical membrane-spanning segment. Residues 602–623 (DRFSPFGRFKVNSEEEEEDALT) are Cytoplasmic-facing. The discontinuously helical intramembrane region spans 624–645 (LSSAMWFSWGVLLNSGIGEGAP). Residues 624-645 (LSSAMWFSWGVLLNSGIGEGAP) are pore-forming. The Cytoplasmic portion of the chain corresponds to 646 to 651 (RSFSAR). Residues 652–668 (ILGMVWAGFAMIIVASY) form a helical membrane-spanning segment. The Extracellular portion of the chain corresponds to 669–833 (TANLAAFLVL…NAPATLTFEN (165 aa)). N-linked (GlcNAc...) asparagine glycosylation is present at Asn695. Residues Ser709 and Asp753 each contribute to the glycine site. Cys765 and Cys819 are joined by a disulfide. Asn792 carries an N-linked (GlcNAc...) asparagine glycan. The helical transmembrane segment at 834–854 (MAGVFMLVAGGIVAGIFLIFI) threads the bilayer. The Cytoplasmic portion of the chain corresponds to 855–943 (EIAYKRHKDA…LSDPSVSTVV (89 aa)). Ser910, Ser911, Ser917, and Ser918 each carry phosphoserine.

This sequence belongs to the glutamate-gated ion channel (TC 1.A.10.1) family. NR1/GRIN1 subfamily. Heterotetramer; the NMDAR subunits are modular and harbor tiered domains that function in concert to regulate opening and closing of the cation-selective ion channel pore. Forms heterotetrameric channels composed of two GluN1/zeta subunits (GRIN1), and two identical GluN2/epsilon subunits (GRIN2A, GRIN2B, GRIN2C or GRIN2D) or GluN3 subunits (GRIN3A or GRIN3B) (in vitro). Can also form heterotetrameric channels that contain at least two GluN1 subunits and at least two different GluN2 subunits (or a combination of one GluN2 and one GluN3 subunits) (in vitro). In vivo, the subunit composition may vary in function of the expression levels of the different subunits. Found in a complex with GRIN2A or GRIN2B, GRIN3A and PPP2CB. Found in a complex with GRIN2A or GRIN2B and GRIN3B. Interacts with SNX27 (via PDZ domain); the interaction is required for recycling to the plasma membrane when endocytosed and prevent degradation in lysosomes. Interacts with DLG4 and MPDZ. Interacts with LRFN1 and LRFN2. Interacts with MYZAP. Found in a complex with DLG4 and PRR7. Found in a complex with GRIN2B and PRR7. Interacts with PRR7; the interaction is reduced following NMDA receptor activity. Post-translationally, NMDA is probably regulated by C-terminal phosphorylation of an isoform of GRIN1 by PKC. Dephosphorylated on Ser-897 probably by protein phosphatase 2A (PPP2CB). Its phosphorylated state is influenced by the formation of the NMDAR-PPP2CB complex and the NMDAR channel activity.

The protein localises to the cell membrane. It localises to the postsynaptic cell membrane. It is found in the postsynaptic density membrane. Its subcellular location is the synaptic cell membrane. The catalysed reaction is Ca(2+)(in) = Ca(2+)(out). It catalyses the reaction Na(+)(in) = Na(+)(out). It carries out the reaction K(+)(in) = K(+)(out). Functionally, component of N-methyl-D-aspartate (NMDA) receptors (NMDARs) that function as heterotetrameric, ligand-gated cation channels with high calcium permeability and voltage-dependent block by Mg(2+). NMDARs participate in synaptic plasticity for learning and memory formation by contributing to the long-term potentiation (LTP). Channel activation requires binding of the neurotransmitter L-glutamate to the GluN2 subunit, glycine or D-serine binding to the GluN1 subunit, plus membrane depolarization to eliminate channel inhibition by Mg(2+). NMDARs mediate simultaneously the potasium efflux and the influx of calcium and sodium. Each GluN2 or GluN3 subunit confers differential attributes to channel properties, including activation, deactivation and desensitization kinetics, pH sensitivity, Ca2(+) permeability, and binding to allosteric modulators. The GluN3 subunits confer distinctive ion channel activation mechanism, which relies exclusively on glycine and does not involve glutamate. The chain is Glutamate receptor ionotropic, NMDA 1 from Canis lupus familiaris (Dog).